The sequence spans 119 residues: Ribosome-binding factor A (119 aa).

It belongs to the RbfA family. Monomer. Binds 30S ribosomal subunits, but not 50S ribosomal subunits or 70S ribosomes.

It localises to the cytoplasm. In terms of biological role, one of several proteins that assist in the late maturation steps of the functional core of the 30S ribosomal subunit. Associates with free 30S ribosomal subunits (but not with 30S subunits that are part of 70S ribosomes or polysomes). Required for efficient processing of 16S rRNA. May interact with the 5'-terminal helix region of 16S rRNA. This is Ribosome-binding factor A from Buchnera aphidicola subsp. Baizongia pistaciae (strain Bp).